The chain runs to 310 residues: Lipoyl synthase (310 aa).

Residues Cys51, Cys56, Cys62, Cys77, Cys81, Cys84, and Ser290 each coordinate [4Fe-4S] cluster. One can recognise a Radical SAM core domain in the interval 63–280; sequence WSRKTATYLA…RRVGESLGLF (218 aa).

Belongs to the radical SAM superfamily. Lipoyl synthase family. [4Fe-4S] cluster serves as cofactor.

It localises to the cytoplasm. The catalysed reaction is [[Fe-S] cluster scaffold protein carrying a second [4Fe-4S](2+) cluster] + N(6)-octanoyl-L-lysyl-[protein] + 2 oxidized [2Fe-2S]-[ferredoxin] + 2 S-adenosyl-L-methionine + 4 H(+) = [[Fe-S] cluster scaffold protein] + N(6)-[(R)-dihydrolipoyl]-L-lysyl-[protein] + 4 Fe(3+) + 2 hydrogen sulfide + 2 5'-deoxyadenosine + 2 L-methionine + 2 reduced [2Fe-2S]-[ferredoxin]. It participates in protein modification; protein lipoylation via endogenous pathway; protein N(6)-(lipoyl)lysine from octanoyl-[acyl-carrier-protein]: step 2/2. Its function is as follows. Catalyzes the radical-mediated insertion of two sulfur atoms into the C-6 and C-8 positions of the octanoyl moiety bound to the lipoyl domains of lipoate-dependent enzymes, thereby converting the octanoylated domains into lipoylated derivatives. The polypeptide is Lipoyl synthase (Chlamydia abortus (strain DSM 27085 / S26/3) (Chlamydophila abortus)).